Here is a 142-residue protein sequence, read N- to C-terminus: Small ribosomal subunit protein bS6 (142 aa).

Residues 113–136 (IKKEPREPREPRAPREPKAEKIEE) are compositionally biased toward basic and acidic residues. Residues 113 to 142 (IKKEPREPREPRAPREPKAEKIEEQTFSEE) form a disordered region.

The protein belongs to the bacterial ribosomal protein bS6 family.

Functionally, binds together with bS18 to 16S ribosomal RNA. The polypeptide is Small ribosomal subunit protein bS6 (Campylobacter curvus (strain 525.92)).